We begin with the raw amino-acid sequence, 372 residues long: MDVLHDDTPDLRSLPQERLASLIAGLGEKPFRARQVYRWLHLRGAASLEEMTDVPRALRERLAEGTRLTTLERATEQRSADGTIKWTWRTRDGKLVESVYLPETDRKTLCVSTQVGCAVGCTFCMTGTMGLARNLEPGEIVDQVHRANRRLIELGEGEGPRPLTNLVFMGMGEPLANYRSLKVALDLLLSEDGPNFSHRHVTVSTSGLVPVMRRLGEETQVKLAVSLNATTDAQRDAIMPINRRYPLAELLRACREFPMKQGRRITFEYVMLGGVNDAPEDAERLARLLRGIPAKVNLIPYNENPGLGFAAPAPGAVERFRDLLVARNVTAVVRKNRGTDIAAACGQLAAEGGPGDPRRRAAAALTGTPAAG.

Catalysis depends on E97, which acts as the Proton acceptor. The 238-residue stretch at 103 to 340 (ETDRKTLCVS…AVVRKNRGTD (238 aa)) folds into the Radical SAM core domain. A disulfide bridge links C110 with C345. [4Fe-4S] cluster-binding residues include C117, C121, and C124. S-adenosyl-L-methionine-binding positions include 172–173 (GE), S204, 226–228 (SLN), and N302. C345 serves as the catalytic S-methylcysteine intermediate. The segment at 350–372 (AEGGPGDPRRRAAAALTGTPAAG) is disordered. Residues 362-372 (AAALTGTPAAG) are compositionally biased toward low complexity.

This sequence belongs to the radical SAM superfamily. RlmN family. The cofactor is [4Fe-4S] cluster.

The protein resides in the cytoplasm. The catalysed reaction is adenosine(2503) in 23S rRNA + 2 reduced [2Fe-2S]-[ferredoxin] + 2 S-adenosyl-L-methionine = 2-methyladenosine(2503) in 23S rRNA + 5'-deoxyadenosine + L-methionine + 2 oxidized [2Fe-2S]-[ferredoxin] + S-adenosyl-L-homocysteine. It carries out the reaction adenosine(37) in tRNA + 2 reduced [2Fe-2S]-[ferredoxin] + 2 S-adenosyl-L-methionine = 2-methyladenosine(37) in tRNA + 5'-deoxyadenosine + L-methionine + 2 oxidized [2Fe-2S]-[ferredoxin] + S-adenosyl-L-homocysteine. In terms of biological role, specifically methylates position 2 of adenine 2503 in 23S rRNA and position 2 of adenine 37 in tRNAs. m2A2503 modification seems to play a crucial role in the proofreading step occurring at the peptidyl transferase center and thus would serve to optimize ribosomal fidelity. This Anaeromyxobacter dehalogenans (strain 2CP-C) protein is Dual-specificity RNA methyltransferase RlmN.